A 509-amino-acid chain; its full sequence is E3 ubiquitin-protein ligase RAD18 (509 aa).

Met-1 is subject to N-acetylmethionine. Residues 25–64 (CGICFEYFNIAVIIPQCSHNYCSLCIRKFLSYKTQCPTCC) form an RING-type zinc finger. Ser-99, Ser-103, Ser-158, and Ser-164 each carry phosphoserine. A UBZ4-type zinc finger spans residues 201 to 228 (KVSCPVCGVSIPENHINKHLDSCLSREE). Zn(2+) is bound by residues Cys-204, Cys-207, His-219, and Cys-223. An LR motif motif is present at residues 232 to 240 (SLRSSAHKR). Residues 248-282 (YNLLSDRDLKKKLKQYGLSVQGNKQQLIKRHQEFV) enclose the SAP domain. Disordered stretches follow at residues 365 to 401 (GRVS…RTDE) and 435 to 509 (VSVT…RNKN). Polar residues-rich tracts occupy residues 435 to 446 (VSVTNHFPQPQL) and 463 to 473 (CTDILFSSDSD). Ser-485 carries the post-translational modification Phosphoserine. Over residues 493-509 (RASECVEIEPRNKRNKN) the composition is skewed to basic and acidic residues.

This sequence belongs to the RAD18 family. In terms of assembly, homodimer. Interacts with UBE2A and UBE2B, one homodimer binding one molecule of UBE2B. Interacts with HLTF. Interacts with SHPRH. Interacts with SPRTN; leading to enhance chromatin association of RAD18 and RAD18-mediated PCNA ubiquitination and translesion DNA synthesis. Interacts (via C-terminus and phosphorylated form) with SLF1 (via BRCT domains); this interaction is required for efficient repair of UV-induced DNA damage. Interacts with SLF2. Interacts with SMC5; this interaction is increased in a SLF1 or SLF2-dependent manner. Expressed in thymus, spleen, brain, and ovary.

It localises to the nucleus. It is found in the cytoplasm. The protein localises to the cytoskeleton. The protein resides in the microtubule organizing center. Its subcellular location is the centrosome. The enzyme catalyses S-ubiquitinyl-[E2 ubiquitin-conjugating enzyme]-L-cysteine + [acceptor protein]-L-lysine = [E2 ubiquitin-conjugating enzyme]-L-cysteine + N(6)-ubiquitinyl-[acceptor protein]-L-lysine.. It functions in the pathway protein modification; protein ubiquitination. Functionally, E3 ubiquitin-protein ligase involved in postreplication repair of UV-damaged DNA. Postreplication repair functions in gap-filling of a daughter strand on replication of damaged DNA. Associates to the E2 ubiquitin conjugating enzyme UBE2B to form the UBE2B-RAD18 ubiquitin ligase complex involved in mono-ubiquitination of DNA-associated PCNA on 'Lys-164'. Has ssDNA binding activity. This Mus musculus (Mouse) protein is E3 ubiquitin-protein ligase RAD18 (Rad18).